We begin with the raw amino-acid sequence, 448 residues long: Probable ribonuclease FAU-1 (448 aa).

This sequence belongs to the FAU-1 family.

In terms of biological role, probable RNase involved in rRNA stability through maturation and/or degradation of precursor rRNAs. Binds to RNA in loop regions with AU-rich sequences. This is Probable ribonuclease FAU-1 from Pyrobaculum calidifontis (strain DSM 21063 / JCM 11548 / VA1).